Consider the following 371-residue polypeptide: MLKFTVHKTSGGARRGTLELNHGTVETPVFQPVGTYGSVKAMSPVELNDIGAQIILGNTFHLWLRPGLEIVEQFGGLHEFIGWDKPILTDSGGFQVFSLSDMRKLTEEGCTFQSPINGDKLFLSPEISMKIQTVLNSDIVMQLDECTPGQVDHATAQKSLQMSLRWAERSRRAFDDLKNPNALFGIVQGNLYTDLRQESLEGLMQVGFDGIAIGGLSVGEPKPEMYRMLTELKDMLPADKPHYLMGVGTPEDLVHGVANGVDMFDCVMPTRNARNGWIFTQWGDVKIKNARYKDDKKPLDEECACYACRNFSRAYLHHLHRVGEILGARLNTIHNLFYYQELMREMRKAIEEDRFEDFRLEFAAKRARSVN.

Aspartate 90 (proton acceptor) is an active-site residue. Substrate contacts are provided by residues 90 to 94 (DSGGF), aspartate 144, glutamine 188, and glycine 215. The segment at 246–252 (GVGTPED) is RNA binding. Catalysis depends on aspartate 265, which acts as the Nucleophile. Residues 270-274 (TRNAR) are RNA binding; important for wobble base 34 recognition. Cysteine 303, cysteine 305, cysteine 308, and histidine 334 together coordinate Zn(2+).

Belongs to the queuine tRNA-ribosyltransferase family. Homodimer. Within each dimer, one monomer is responsible for RNA recognition and catalysis, while the other monomer binds to the replacement base PreQ1. It depends on Zn(2+) as a cofactor.

The catalysed reaction is 7-aminomethyl-7-carbaguanine + guanosine(34) in tRNA = 7-aminomethyl-7-carbaguanosine(34) in tRNA + guanine. It participates in tRNA modification; tRNA-queuosine biosynthesis. Its function is as follows. Catalyzes the base-exchange of a guanine (G) residue with the queuine precursor 7-aminomethyl-7-deazaguanine (PreQ1) at position 34 (anticodon wobble position) in tRNAs with GU(N) anticodons (tRNA-Asp, -Asn, -His and -Tyr). Catalysis occurs through a double-displacement mechanism. The nucleophile active site attacks the C1' of nucleotide 34 to detach the guanine base from the RNA, forming a covalent enzyme-RNA intermediate. The proton acceptor active site deprotonates the incoming PreQ1, allowing a nucleophilic attack on the C1' of the ribose to form the product. After dissociation, two additional enzymatic reactions on the tRNA convert PreQ1 to queuine (Q), resulting in the hypermodified nucleoside queuosine (7-(((4,5-cis-dihydroxy-2-cyclopenten-1-yl)amino)methyl)-7-deazaguanosine). This Chromobacterium violaceum (strain ATCC 12472 / DSM 30191 / JCM 1249 / CCUG 213 / NBRC 12614 / NCIMB 9131 / NCTC 9757 / MK) protein is Queuine tRNA-ribosyltransferase.